A 497-amino-acid polypeptide reads, in one-letter code: Membrane-bound lytic murein transglycosylase F (497 aa).

The N-terminal stretch at 1 to 29 is a signal peptide; it reads MFFRPDFRPRCAKWLIATGLFLMLGACVE. Positions 30-267 are non-LT domain; sequence KPTTLERVKE…RLKDRYYGHV (238 aa). The tract at residues 268–497 is LT domain; that stretch reads DVLGYVGAYT…PASSPEKPAL (230 aa). E314 is an active-site residue. The interval 464-497 is disordered; sequence VADGNLHVPGVDKTQPPAPTAPVVPASSPEKPAL. Residues 486 to 497 show a composition bias toward low complexity; sequence VVPASSPEKPAL.

It in the N-terminal section; belongs to the bacterial solute-binding protein 3 family. In the C-terminal section; belongs to the transglycosylase Slt family.

The protein localises to the cell outer membrane. The catalysed reaction is Exolytic cleavage of the (1-&gt;4)-beta-glycosidic linkage between N-acetylmuramic acid (MurNAc) and N-acetylglucosamine (GlcNAc) residues in peptidoglycan, from either the reducing or the non-reducing ends of the peptidoglycan chains, with concomitant formation of a 1,6-anhydrobond in the MurNAc residue.. In terms of biological role, murein-degrading enzyme that degrades murein glycan strands and insoluble, high-molecular weight murein sacculi, with the concomitant formation of a 1,6-anhydromuramoyl product. Lytic transglycosylases (LTs) play an integral role in the metabolism of the peptidoglycan (PG) sacculus. Their lytic action creates space within the PG sacculus to allow for its expansion as well as for the insertion of various structures such as secretion systems and flagella. The sequence is that of Membrane-bound lytic murein transglycosylase F from Pseudomonas syringae pv. tomato (strain ATCC BAA-871 / DC3000).